The following is a 591-amino-acid chain: Aspartate--tRNA(Asp/Asn) ligase (591 aa).

E174 provides a ligand contact to L-aspartate. The segment at 198 to 201 (QLFK) is aspartate. R220 serves as a coordination point for L-aspartate. Residues 220–222 (RDE) and Q229 contribute to the ATP site. H450 is a binding site for L-aspartate. An ATP-binding site is contributed by E483. R490 is an L-aspartate binding site. Position 535–538 (535–538 (GLDR)) interacts with ATP.

Belongs to the class-II aminoacyl-tRNA synthetase family. Type 1 subfamily. Homodimer.

Its subcellular location is the cytoplasm. The catalysed reaction is tRNA(Asx) + L-aspartate + ATP = L-aspartyl-tRNA(Asx) + AMP + diphosphate. In terms of biological role, aspartyl-tRNA synthetase with relaxed tRNA specificity since it is able to aspartylate not only its cognate tRNA(Asp) but also tRNA(Asn). Reaction proceeds in two steps: L-aspartate is first activated by ATP to form Asp-AMP and then transferred to the acceptor end of tRNA(Asp/Asn). The protein is Aspartate--tRNA(Asp/Asn) ligase of Azotobacter vinelandii (strain DJ / ATCC BAA-1303).